Reading from the N-terminus, the 616-residue chain is tRNA uridine 5-carboxymethylaminomethyl modification enzyme MnmG (616 aa).

Residues 10 to 15, V122, and S177 each bind FAD; that span reads GAGHAG. 271-285 provides a ligand contact to NAD(+); it reads GPRYCPSIEDKVVRF. An FAD-binding site is contributed by Q368.

This sequence belongs to the MnmG family. Homodimer. Heterotetramer of two MnmE and two MnmG subunits. FAD is required as a cofactor.

The protein localises to the cytoplasm. NAD-binding protein involved in the addition of a carboxymethylaminomethyl (cmnm) group at the wobble position (U34) of certain tRNAs, forming tRNA-cmnm(5)s(2)U34. This is tRNA uridine 5-carboxymethylaminomethyl modification enzyme MnmG from Malacoplasma penetrans (strain HF-2) (Mycoplasma penetrans).